The primary structure comprises 697 residues: Serine/threonine-protein kinase tousled-like 2 (697 aa).

Disordered stretches follow at residues 25-159 (VAKG…SQSE) and 288-316 (KLLI…SKSN). Residues 31-44 (HNESSNQSLCSVGS) are compositionally biased toward polar residues. The segment covering 46–61 (SDKELETPEKKSNDQR) has biased composition (basic and acidic residues). The span at 109–145 (SSPQHSLSNPPAAVQQGSPSSISSVNTDHSHTSTSHK) shows a compositional bias: polar residues. Coiled-coil stretches lie at residues 265–294 (AFQN…IKKK) and 336–373 (KLRL…IHNE). A Protein kinase domain is found at 388–666 (YLLLHLLGRG…VHQLASDPYL (279 aa)). ATP contacts are provided by residues 394 to 402 (LGRGGFSEV) and lysine 417. Aspartate 518 functions as the Proton acceptor in the catalytic mechanism.

This sequence belongs to the protein kinase superfamily. Ser/Thr protein kinase family. As to quaternary structure, monomer. May form homodimers; homodimerization may enhance autophosphoylation and enzymatic activity. Heterodimer with TLK1. Mg(2+) serves as cofactor. Post-translationally, phosphorylated. Autophosphorylated; phosphorylation promotes the assembly of higher order oligomers and enzymatic activity.

Its subcellular location is the nucleus. The protein localises to the nucleoplasm. It localises to the cytoplasm. The protein resides in the perinuclear region. It is found in the cytoskeleton. It catalyses the reaction L-seryl-[protein] + ATP = O-phospho-L-seryl-[protein] + ADP + H(+). It carries out the reaction L-threonyl-[protein] + ATP = O-phospho-L-threonyl-[protein] + ADP + H(+). Serine/threonine-protein kinase involved in the process of chromatin assembly and probably also DNA replication, transcription, repair, and chromosome segregation. Negative regulator of amino acid starvation-induced autophagy. This is Serine/threonine-protein kinase tousled-like 2 from Danio rerio (Zebrafish).